We begin with the raw amino-acid sequence, 215 residues long: ATP-dependent Clp protease proteolytic subunit 1 (215 aa).

S108 (nucleophile) is an active-site residue. Residue H133 is part of the active site.

It belongs to the peptidase S14 family. As to quaternary structure, fourteen ClpP subunits assemble into 2 heptameric rings which stack back to back to give a disk-like structure with a central cavity, resembling the structure of eukaryotic proteasomes.

It is found in the cytoplasm. The catalysed reaction is Hydrolysis of proteins to small peptides in the presence of ATP and magnesium. alpha-casein is the usual test substrate. In the absence of ATP, only oligopeptides shorter than five residues are hydrolyzed (such as succinyl-Leu-Tyr-|-NHMec, and Leu-Tyr-Leu-|-Tyr-Trp, in which cleavage of the -Tyr-|-Leu- and -Tyr-|-Trp bonds also occurs).. Its function is as follows. Cleaves peptides in various proteins in a process that requires ATP hydrolysis. Has a chymotrypsin-like activity. Plays a major role in the degradation of misfolded proteins. This Paraburkholderia xenovorans (strain LB400) protein is ATP-dependent Clp protease proteolytic subunit 1.